The primary structure comprises 140 residues: Alpha-lactalbumin (140 aa).

The N-terminal stretch at 1-19 (MMSLLPLLLIGIVLPATQA) is a signal peptide. Residues 20–140 (KDYGKCELNQ…CRENLDQWNC (121 aa)) enclose the C-type lysozyme domain. Disulfide bonds link C25/C140, C47/C131, C80/C96, and C92/C110. Residues K98, D101, D103, D106, and D107 each contribute to the Ca(2+) site.

Lactose synthase (LS) is a heterodimer of a catalytic component, beta1,4-galactosyltransferase (beta4Gal-T1) and a regulatory component, alpha-lactalbumin (LA). Mammary gland specific. Secreted in milk.

It localises to the secreted. Regulatory subunit of lactose synthase, changes the substrate specificity of galactosyltransferase in the mammary gland making glucose a good acceptor substrate for this enzyme. This enables LS to synthesize lactose, the major carbohydrate component of milk. In other tissues, galactosyltransferase transfers galactose onto the N-acetylglucosamine of the oligosaccharide chains in glycoproteins. The chain is Alpha-lactalbumin (LALBA) from Trichosurus vulpecula (Brush-tailed possum).